A 419-amino-acid chain; its full sequence is L-rhamnose isomerase (419 aa).

Residues histidine 262, aspartate 294, and aspartate 296 each contribute to the Mn(2+) site.

This sequence belongs to the rhamnose isomerase family. Homotetramer. Mn(2+) serves as cofactor.

It is found in the cytoplasm. It carries out the reaction L-rhamnopyranose = L-rhamnulose. The protein operates within carbohydrate degradation; L-rhamnose degradation; glycerone phosphate from L-rhamnose: step 1/3. In terms of biological role, catalyzes the interconversion of L-rhamnose and L-rhamnulose. The chain is L-rhamnose isomerase from Escherichia coli (strain K12 / MC4100 / BW2952).